The chain runs to 314 residues: Ribonuclease Z (314 aa).

Zn(2+) is bound by residues His63, His65, Asp67, His68, His142, Asp205, and His263. The active-site Proton acceptor is the Asp67.

Belongs to the RNase Z family. In terms of assembly, homodimer. The cofactor is Zn(2+).

It catalyses the reaction Endonucleolytic cleavage of RNA, removing extra 3' nucleotides from tRNA precursor, generating 3' termini of tRNAs. A 3'-hydroxy group is left at the tRNA terminus and a 5'-phosphoryl group is left at the trailer molecule.. In terms of biological role, zinc phosphodiesterase, which displays some tRNA 3'-processing endonuclease activity. Probably involved in tRNA maturation, by removing a 3'-trailer from precursor tRNA. The chain is Ribonuclease Z from Kineococcus radiotolerans (strain ATCC BAA-149 / DSM 14245 / SRS30216).